A 473-amino-acid polypeptide reads, in one-letter code: Glutamate--tRNA ligase 2 (473 aa).

The 'HIGH' region signature appears at Pro11–Gly21. The segment covering Lys113–Ser133 has biased composition (basic and acidic residues). Residues Lys113–Pro136 are disordered. The short motif at Lys240 to Arg244 is the 'KMSKS' region element. An ATP-binding site is contributed by Lys243.

This sequence belongs to the class-I aminoacyl-tRNA synthetase family. Glutamate--tRNA ligase type 1 subfamily. As to quaternary structure, monomer.

The protein resides in the cytoplasm. It catalyses the reaction tRNA(Glu) + L-glutamate + ATP = L-glutamyl-tRNA(Glu) + AMP + diphosphate. Its function is as follows. Catalyzes the attachment of glutamate to tRNA(Glu) in a two-step reaction: glutamate is first activated by ATP to form Glu-AMP and then transferred to the acceptor end of tRNA(Glu). The protein is Glutamate--tRNA ligase 2 of Brucella abortus (strain S19).